The primary structure comprises 157 residues: Myosin regulatory light chain, striated adductor muscle (157 aa).

EF-hand domains are found at residues 16-51 (KQIQ…LGRA) and 85-120 (DSEE…MGDN). Residues aspartate 29, aspartate 31, aspartate 33, and aspartate 40 each contribute to the Ca(2+) site.

Its function is as follows. In molluscan muscle, calcium regulation is associated with myosin rather than with actin. Muscle myosin contains two types of light chains: the catalytic light chain, essential for ATPase activity, and the regulatory light chain, a calcium-binding protein responsible for Ca(2+) dependent binding and Ca(2+) dependent Mg-ATPase activity. In Argopecten irradians (Bay scallop), this protein is Myosin regulatory light chain, striated adductor muscle.